Reading from the N-terminus, the 60-residue chain is uncharacterized protein (60 aa).

The protein localises to the host cytoplasm. This is an uncharacterized protein from Escherichia phage Mu (Bacteriophage Mu).